The sequence spans 831 residues: MVHETRSRTLAASQEEGKAAPKKQKTESKEQEGGQQAPSKNKKTADNEEHDGEQEPSKNKKLKAEESDLNGKATAVKEFSEFCKAIREHLTIEDMRKILQGNEQDASGSEDAVVPRCEDVMFYGPLDKCPVCGGQLECKGLKYNCTGTHSEWACCSFSTNNPSRRGGPIKVPDDVKNDFVRKWLKQQEGNKYPKRNLDDEGIFSGMMIALSGRMSRSHGYFKEQIMKHGGKVNNSVIGVTCVVASPAERHQGGSGGFAEALERGTPVVSENWIIDSVQKKEKQPLAAYDIASDVVPEGRGLPLGNLDPTEEAIETLAAELKLAGKRAVHKDSKLEKDGGHIYEKDGIIYNCAFSVCDLGGDINQLCIMQLIMVPENHLHLYYKKGPIGHDQMAEERVEDFGSRFNDAIKEFVRLFEEVTGNEFEPWEREKKFKKKCMKMYPLDMDDGVDVRHGGVALRQLGAAAAHCKLDPSVTFIMKQLCSQEIYRYALTEMGHDVPDLPIGMLTDLHLKRGEETLLEWKQDVESAPESGPAADAFWMEISNKWFTLFPTTRPYTMKGYEQIADNVASGLETVRDINVASRLIGDVFGSTLDDPLSQCYKKLGCSINRVVEDSEDYKMILKYLEKTYEPVKVGDVVYSATVERIYAVESSALPSYDEIKKLPNKVLLWCGTRSSNLLRHLRDGFVPAVCHIPVPGYMFGKAIVCSDAAAEAALYGFTAVDRPEGYLVLAVASLGKEIQEITGTPGSEDVKRMEEKKMGVKGVGRKTTDPSEHFTWRDGVTVPCGKLVPSTNKDGPLEYNEYAVYDPKQVSIAFLVGVKYEEQNMEVVPDE.

A disordered region spans residues 1–69; the sequence is MVHETRSRTL…KKLKAEESDL (69 aa). Basic and acidic residues-rich tracts occupy residues 15 to 32 and 43 to 66; these read EEGK…KEQE and KTAD…KAEE. In terms of domain architecture, PADR1 zinc-binding spans 49-199; sequence EHDGEQEPSK…NKYPKRNLDD (151 aa). Positions 124 to 168 are zinc ribbon; that stretch reads GPLDKCPVCGGQLECKGLKYNCTGTHSEWACCSFSTNNPSRRGGP. Zn(2+)-binding residues include cysteine 129, cysteine 132, cysteine 145, and cysteine 155. Residues 200–290 form the BRCT domain; the sequence is EGIFSGMMIA…EKQPLAAYDI (91 aa). One can recognise a WGR domain in the interval 338–439; sequence GGHIYEKDGI…KKFKKKCMKM (102 aa). Positions 466 to 585 constitute a PARP alpha-helical domain; sequence HCKLDPSVTF…DINVASRLIG (120 aa). In terms of domain architecture, PARP catalytic spans 594–827; sequence DPLSQCYKKL…VKYEEQNMEV (234 aa).

This sequence belongs to the ARTD/PARP family.

The protein resides in the nucleus. The enzyme catalyses L-aspartyl-[protein] + NAD(+) = 4-O-(ADP-D-ribosyl)-L-aspartyl-[protein] + nicotinamide. It carries out the reaction L-glutamyl-[protein] + NAD(+) = 5-O-(ADP-D-ribosyl)-L-glutamyl-[protein] + nicotinamide. Functionally, involved in the base excision repair (BER) pathway, by catalyzing the poly(ADP-ribosyl)ation of a limited number of acceptor proteins involved in chromatin architecture and in DNA metabolism. This modification follows DNA damages and appears as an obligatory step in a detection/signaling pathway leading to the reparation of DNA strand breaks. The chain is Protein ADP-ribosyltransferase PARP3 (PARP3) from Oryza sativa subsp. japonica (Rice).